A 641-amino-acid polypeptide reads, in one-letter code: Bifunctional protein glk (641 aa).

The tract at residues 1–340 (MSTGAQTKAA…QLSNRTGGAS (340 aa)) is glucokinase. Position 23–28 (23–28 (ADVGGT)) interacts with ATP. The HTH rpiR-type domain occupies 341 to 417 (SAVFERIRQM…LKLATGLTGT (77 aa)). Positions 341-641 (SAVFERIRQM…SHGAAPAAKD (301 aa)) are putative HTH-type transcriptional regulator. The segment at residues 377-396 (IVDIARKADVSQPTVIRFCR) is a DNA-binding region (H-T-H motif). Positions 461-600 (AIDILNNARR…AVGVAIRRAA (140 aa)) constitute an SIS domain. A helical transmembrane segment spans residues 576 to 596 (SMISRILHLVMIDILAVGVAI).

The protein in the N-terminal section; belongs to the bacterial glucokinase family.

The protein localises to the membrane. The enzyme catalyses D-glucose + ATP = D-glucose 6-phosphate + ADP + H(+). The polypeptide is Bifunctional protein glk (glk) (Burkholderia pseudomallei (strain 1710b)).